We begin with the raw amino-acid sequence, 2414 residues long: Centrosome-associated protein CEP250 (2414 aa).

Coiled-coil stretches lie at residues 91–153 (EEPN…ELVR) and 248–357 (LVAK…VEEE). Disordered stretches follow at residues 356–384 (EEDT…DPQD), 672–707 (AEEA…QETA), 1191–1212 (SRPE…DPDQ), 1269–1303 (EAQK…QNSL), 2050–2071 (AGAR…QERQ), 2194–2238 (ALEE…KERL), and 2275–2317 (RERR…GSSD). The span at 371–381 (QSDCNGLSQFD) shows a compositional bias: polar residues. Residues 400-1165 (QQAVQDLRQQ…QLEALVAEQQ (766 aa)) adopt a coiled-coil conformation. Positions 684–704 (RGTREEKEELKDKLSEAHHQQ) are enriched in basic and acidic residues. Coiled coils occupy residues 1237-2200 (LQKL…EQQS) and 2231-2290 (GVEE…ASRA). Low complexity predominate over residues 1280 to 1289 (QDLQRQLSQS). Residues 2196-2209 (EEQQSGGPHSTSRA) are compositionally biased toward polar residues. Over residues 2275-2286 (RERRKLKRDSVR) the composition is skewed to basic and acidic residues. Ser2292 carries the post-translational modification Phosphoserine. The span at 2305–2317 (QQDGRGSQRGSSD) shows a compositional bias: low complexity. A coiled-coil region spans residues 2320–2345 (LVVELQREVALLRAQLALERKQRQDY). Phosphoserine; by NEK2 occurs at positions 2389 and 2393. Positions 2390–2414 (LNQSLTSPGPCLLHPSLDTTQNTHR) are disordered.

Monomer and homodimer. Forms a complex in vitro with both NEK2 kinase and the PPP1CC catalytic subunit of protein phosphatase 1 (PP1). Interacts with CEP135. Interacts with CROCC/rootletin. Interacts with CNTLN. Interacts with NIN (via C-terminus). In terms of processing, differentially phosphorylated during cell cycle. Phosphorylation may regulate association/dissociation from centrosome. During M phase of mitosis, C-terminal part is phosphorylated by NEK2, suggesting that it may trigger the dissociation from the mitotic centrosome. Dephosphorylated in vitro by the PP1 phosphatase. In terms of tissue distribution, expressed in the retina.

Its subcellular location is the cytoplasm. It localises to the perinuclear region. The protein localises to the cytoskeleton. The protein resides in the microtubule organizing center. It is found in the centrosome. Its subcellular location is the centriole. It localises to the cilium basal body. The protein localises to the cell projection. The protein resides in the cilium. It is found in the photoreceptor outer segment. Its subcellular location is the photoreceptor inner segment. In terms of biological role, plays an important role in centrosome cohesion during interphase. Recruits CCDC102B to the proximal ends of centrioles. Maintains centrosome cohesion by forming intercentriolar linkages. Accumulates at the proximal end of each centriole, forming supramolecular assemblies with viscous material properties that promote organelle cohesion. May be involved in ciliogenesis. This Mus musculus (Mouse) protein is Centrosome-associated protein CEP250 (Cep250).